Consider the following 271-residue polypeptide: ATP synthase subunit a (271 aa).

5 helical membrane passes run 40 to 60 (TINI…LVLF), 100 to 120 (LIAP…LMDL), 146 to 166 (DVNV…FYNI), 220 to 240 (LIFI…LNVP), and 242 to 262 (AIFH…LTIV).

The protein belongs to the ATPase A chain family. F-type ATPases have 2 components, CF(1) - the catalytic core - and CF(0) - the membrane proton channel. CF(1) has five subunits: alpha(3), beta(3), gamma(1), delta(1), epsilon(1). CF(0) has three main subunits: a(1), b(2) and c(9-12). The alpha and beta chains form an alternating ring which encloses part of the gamma chain. CF(1) is attached to CF(0) by a central stalk formed by the gamma and epsilon chains, while a peripheral stalk is formed by the delta and b chains.

The protein resides in the cell inner membrane. Functionally, key component of the proton channel; it plays a direct role in the translocation of protons across the membrane. The protein is ATP synthase subunit a of Shigella flexneri.